The sequence spans 467 residues: Asparagine--tRNA ligase (467 aa).

It belongs to the class-II aminoacyl-tRNA synthetase family. Homodimer.

The protein localises to the cytoplasm. The catalysed reaction is tRNA(Asn) + L-asparagine + ATP = L-asparaginyl-tRNA(Asn) + AMP + diphosphate + H(+). The chain is Asparagine--tRNA ligase from Glaesserella parasuis serovar 5 (strain SH0165) (Haemophilus parasuis).